The following is a 197-amino-acid chain: MPTPTKGPRLGGGPAHERLMLANLATALFEHERITTTEAKAKRLRPLAERLITFAKRGDLASRRRVLTVVKDKGVVHTLFTEIAPAMAERPGGYTRITKVGPRKGDNAPMAVIELVLEPLSPKQATVAEATAATKRAAKKADAPQEPVADEATDADESVEDEAPAQDDSADEVEAAADETPADDAEADAEKSSDTEK.

The interval 136–197 (RAAKKADAPQ…DAEKSSDTEK (62 aa)) is disordered. Acidic residues predominate over residues 148 to 187 (VADEATDADESVEDEAPAQDDSADEVEAAADETPADDAEA). Basic and acidic residues predominate over residues 188–197 (DAEKSSDTEK).

This sequence belongs to the bacterial ribosomal protein bL17 family. In terms of assembly, part of the 50S ribosomal subunit. Contacts protein L32.

The protein is Large ribosomal subunit protein bL17 of Beutenbergia cavernae (strain ATCC BAA-8 / DSM 12333 / CCUG 43141 / JCM 11478 / NBRC 16432 / NCIMB 13614 / HKI 0122).